Reading from the N-terminus, the 101-residue chain is Large ribosomal subunit protein uL24 (101 aa).

It belongs to the universal ribosomal protein uL24 family. As to quaternary structure, part of the 50S ribosomal subunit.

One of two assembly initiator proteins, it binds directly to the 5'-end of the 23S rRNA, where it nucleates assembly of the 50S subunit. Functionally, one of the proteins that surrounds the polypeptide exit tunnel on the outside of the subunit. The protein is Large ribosomal subunit protein uL24 of Streptococcus pyogenes serotype M2 (strain MGAS10270).